A 92-amino-acid chain; its full sequence is UPF0335 protein BMEI0289 (92 aa).

It belongs to the UPF0335 family.

This chain is UPF0335 protein BMEI0289, found in Brucella melitensis biotype 1 (strain ATCC 23456 / CCUG 17765 / NCTC 10094 / 16M).